Consider the following 125-residue polypeptide: Large ribosomal subunit protein bL20 (125 aa).

This sequence belongs to the bacterial ribosomal protein bL20 family.

Its function is as follows. Binds directly to 23S ribosomal RNA and is necessary for the in vitro assembly process of the 50S ribosomal subunit. It is not involved in the protein synthesizing functions of that subunit. This Rhodospirillum rubrum (strain ATCC 11170 / ATH 1.1.1 / DSM 467 / LMG 4362 / NCIMB 8255 / S1) protein is Large ribosomal subunit protein bL20.